The following is a 355-amino-acid chain: Uroporphyrinogen decarboxylase (355 aa).

Residues 27–31 (RQAGR), Asp77, Tyr154, Thr209, and His327 each bind substrate.

Belongs to the uroporphyrinogen decarboxylase family. Homodimer.

The protein resides in the cytoplasm. It catalyses the reaction uroporphyrinogen III + 4 H(+) = coproporphyrinogen III + 4 CO2. It functions in the pathway porphyrin-containing compound metabolism; protoporphyrin-IX biosynthesis; coproporphyrinogen-III from 5-aminolevulinate: step 4/4. Its function is as follows. Catalyzes the decarboxylation of four acetate groups of uroporphyrinogen-III to yield coproporphyrinogen-III. The polypeptide is Uroporphyrinogen decarboxylase (Yersinia enterocolitica serotype O:8 / biotype 1B (strain NCTC 13174 / 8081)).